The primary structure comprises 346 residues: Phosphoribosylformylglycinamidine cyclo-ligase (346 aa).

The protein belongs to the AIR synthase family.

The protein localises to the cytoplasm. The catalysed reaction is 2-formamido-N(1)-(5-O-phospho-beta-D-ribosyl)acetamidine + ATP = 5-amino-1-(5-phospho-beta-D-ribosyl)imidazole + ADP + phosphate + H(+). It participates in purine metabolism; IMP biosynthesis via de novo pathway; 5-amino-1-(5-phospho-D-ribosyl)imidazole from N(2)-formyl-N(1)-(5-phospho-D-ribosyl)glycinamide: step 2/2. In Shewanella piezotolerans (strain WP3 / JCM 13877), this protein is Phosphoribosylformylglycinamidine cyclo-ligase.